A 255-amino-acid polypeptide reads, in one-letter code: Thiazole synthase (255 aa).

Residue Lys-96 is the Schiff-base intermediate with DXP of the active site. Residues Gly-157, 183 to 184 (AG), and 205 to 206 (NT) contribute to the 1-deoxy-D-xylulose 5-phosphate site.

This sequence belongs to the ThiG family. As to quaternary structure, homotetramer. Forms heterodimers with either ThiH or ThiS.

It localises to the cytoplasm. It catalyses the reaction [ThiS sulfur-carrier protein]-C-terminal-Gly-aminoethanethioate + 2-iminoacetate + 1-deoxy-D-xylulose 5-phosphate = [ThiS sulfur-carrier protein]-C-terminal Gly-Gly + 2-[(2R,5Z)-2-carboxy-4-methylthiazol-5(2H)-ylidene]ethyl phosphate + 2 H2O + H(+). It functions in the pathway cofactor biosynthesis; thiamine diphosphate biosynthesis. Its function is as follows. Catalyzes the rearrangement of 1-deoxy-D-xylulose 5-phosphate (DXP) to produce the thiazole phosphate moiety of thiamine. Sulfur is provided by the thiocarboxylate moiety of the carrier protein ThiS. In vitro, sulfur can be provided by H(2)S. This Bacillus pumilus (strain SAFR-032) protein is Thiazole synthase.